We begin with the raw amino-acid sequence, 477 residues long: Ribulose bisphosphate carboxylase large chain (477 aa).

The propeptide occupies methionine 1 to serine 2. Proline 3 is modified (N-acetylproline). Lysine 14 bears the N6,N6,N6-trimethyllysine mark. The substrate site is built by asparagine 123 and threonine 173. The active-site Proton acceptor is lysine 175. Lysine 177 is a substrate binding site. Mg(2+) is bound by residues lysine 201, aspartate 203, and glutamate 204. N6-carboxylysine is present on lysine 201. The active-site Proton acceptor is the histidine 294. The substrate site is built by arginine 295, histidine 327, and serine 379.

The protein belongs to the RuBisCO large chain family. Type I subfamily. As to quaternary structure, heterohexadecamer of 8 large chains and 8 small chains; disulfide-linked. The disulfide link is formed within the large subunit homodimers. Mg(2+) is required as a cofactor. The disulfide bond which can form in the large chain dimeric partners within the hexadecamer appears to be associated with oxidative stress and protein turnover.

It is found in the plastid. The protein localises to the chloroplast. It catalyses the reaction 2 (2R)-3-phosphoglycerate + 2 H(+) = D-ribulose 1,5-bisphosphate + CO2 + H2O. It carries out the reaction D-ribulose 1,5-bisphosphate + O2 = 2-phosphoglycolate + (2R)-3-phosphoglycerate + 2 H(+). In terms of biological role, ruBisCO catalyzes two reactions: the carboxylation of D-ribulose 1,5-bisphosphate, the primary event in carbon dioxide fixation, as well as the oxidative fragmentation of the pentose substrate in the photorespiration process. Both reactions occur simultaneously and in competition at the same active site. In Persea americana (Avocado), this protein is Ribulose bisphosphate carboxylase large chain.